The chain runs to 322 residues: MSEQNTFSSPEHITVLLHEAVDGLALKDKGIYIDGTFGRGGHSRLILSKLTENGRLIAIDRDPRAIAAAEEIQDSRFHIEHNSFSAIPYICEKLGLVGKIDGILLDLGVSSPQLDDAERGFSFMKDGPLDMRMDTSKGLSAAQWLQQVTEEDLAWVLKTFGEERFAKRIAHAIVNYNKSAVQNGTEPLTRTLPLAELIAQAVPFKDKHKHPATRSFQAIRIFINSELDELESVLHSALTVLAPEGRLSVISFHSLEDRMVKHFMRKQSKGESIPKGLPLREDQINRNRTLKVIGKAIQPKESEVFANPRSRSAVLRVAERIG.

Residues 40 to 42 (GGH), D60, F84, D106, and Q113 each bind S-adenosyl-L-methionine.

It belongs to the methyltransferase superfamily. RsmH family.

The protein localises to the cytoplasm. It carries out the reaction cytidine(1402) in 16S rRNA + S-adenosyl-L-methionine = N(4)-methylcytidine(1402) in 16S rRNA + S-adenosyl-L-homocysteine + H(+). Its function is as follows. Specifically methylates the N4 position of cytidine in position 1402 (C1402) of 16S rRNA. This chain is Ribosomal RNA small subunit methyltransferase H, found in Mannheimia succiniciproducens (strain KCTC 0769BP / MBEL55E).